The primary structure comprises 294 residues: Cytidine deaminase (294 aa).

CMP/dCMP-type deaminase domains are found at residues 49–169 and 188–294; these read TPQQ…FGPA and ETQD…YIAL. Residue 90–92 coordinates substrate; the sequence is NLE. His-103 lines the Zn(2+) pocket. Glu-105 functions as the Proton donor in the catalytic mechanism. Cys-130 and Cys-133 together coordinate Zn(2+).

It belongs to the cytidine and deoxycytidylate deaminase family. In terms of assembly, homodimer. The cofactor is Zn(2+).

The enzyme catalyses cytidine + H2O + H(+) = uridine + NH4(+). The catalysed reaction is 2'-deoxycytidine + H2O + H(+) = 2'-deoxyuridine + NH4(+). Functionally, this enzyme scavenges exogenous and endogenous cytidine and 2'-deoxycytidine for UMP synthesis. This Pasteurella multocida (strain Pm70) protein is Cytidine deaminase.